Consider the following 494-residue polypeptide: DnaJ homolog subfamily C member 7 (494 aa).

Ala2 bears the N-acetylalanine mark. 9 TPR repeats span residues 28–61 (AETF…CPKN), 62–95 (ASYY…DDSF), 96–129 (VRGH…DHKN), 142–175 (VMEY…APAC), 177–209 (RFKI…DSTN), 210–243 (ADAL…APDH), 256–289 (LKAK…DPNN), 294–327 (AKLY…DDTY), and 328–361 (IKAY…EKTK). In terms of domain architecture, J spans 381 to 451 (DYYKILGVDK…KKKTRYDSGQ (71 aa)). The residue at position 393 (Ser393) is a Phosphoserine.

Associates with complexes containing chaperones HSP70 and HSP90. Interacts with the GAP domain of NF1. Interacts with HSP90AA1. Interacts with HSPA1A/B; the interaction is enhanced by ATP. Interacts with HSP90AB1. Interacts with PGR. Interacts with RAD9A; the interaction is interrupted by UV and heat shock treatments. Interacts with HUS1 and RAD1. Interacts with NR1I3. The DNAJC7-NR1I3 complex may also include HSP90. Interacts with HSPA8.

Its subcellular location is the cytoplasm. It localises to the nucleus. The protein resides in the cytoskeleton. Its function is as follows. Acts as a co-chaperone regulating the molecular chaperones HSP70 and HSP90 in folding of steroid receptors, such as the glucocorticoid receptor and the progesterone receptor. Proposed to act as a recycling chaperone by facilitating the return of chaperone substrates to early stages of chaperoning if further folding is required. In vitro, induces ATP-independent dissociation of HSP90 but not of HSP70 from the chaperone-substrate complexes. Recruits NR1I3 to the cytoplasm. This chain is DnaJ homolog subfamily C member 7 (DNAJC7), found in Homo sapiens (Human).